We begin with the raw amino-acid sequence, 392 residues long: tRNA-specific 2-thiouridylase MnmA (392 aa).

ATP is bound by residues 18 to 25 (GMSGGVDS) and M44. Positions 104–106 (NPD) are interaction with target base in tRNA. The Nucleophile role is filled by C109. C109 and C208 are joined by a disulfide. An ATP-binding site is contributed by G133. Positions 158–160 (KDQ) are interaction with tRNA. The active-site Cysteine persulfide intermediate is C208. Positions 320–321 (RY) are interaction with tRNA.

Belongs to the MnmA/TRMU family.

It localises to the cytoplasm. It carries out the reaction S-sulfanyl-L-cysteinyl-[protein] + uridine(34) in tRNA + AH2 + ATP = 2-thiouridine(34) in tRNA + L-cysteinyl-[protein] + A + AMP + diphosphate + H(+). In terms of biological role, catalyzes the 2-thiolation of uridine at the wobble position (U34) of tRNA, leading to the formation of s(2)U34. The chain is tRNA-specific 2-thiouridylase MnmA from Marinobacter nauticus (strain ATCC 700491 / DSM 11845 / VT8) (Marinobacter aquaeolei).